A 466-amino-acid polypeptide reads, in one-letter code: Alpha-1,3-mannosyltransferase CMT1 (466 aa).

Residues 1–23 are disordered; it reads MFRNTLRTFPRPATPSLPTSSHS. Over 1-33 the chain is Cytoplasmic; the sequence is MFRNTLRTFPRPATPSLPTSSHSPIARASLSKS. Residues 34–54 form a helical; Signal-anchor for type II membrane protein membrane-spanning segment; that stretch reads PLFVLSLVLVCIFFLSFLSHP. The Lumenal portion of the chain corresponds to 55-466; that stretch reads DPSARKLQWP…ETRWVQPWLE (412 aa).

Mg(2+) serves as cofactor. The cofactor is Mn(2+). Co(2+) is required as a cofactor.

The protein resides in the golgi apparatus membrane. It functions in the pathway protein modification; protein glycosylation. Its function is as follows. Responsible for addition of mannose residues in an alpha-1,3 linkage to a polymannosly precursor. May be involved in synthesis of capsule glucuronoxylomannan. The polypeptide is Alpha-1,3-mannosyltransferase CMT1 (Cryptococcus neoformans var. neoformans serotype D (strain JEC21 / ATCC MYA-565) (Filobasidiella neoformans)).